Consider the following 472-residue polypeptide: D-inositol 3-phosphate glycosyltransferase (472 aa).

His48 is a 1D-myo-inositol 3-phosphate binding site. Residues 54-55 (QP) and Gly62 each bind UDP-N-acetyl-alpha-D-glucosamine. 1D-myo-inositol 3-phosphate contacts are provided by residues 59–64 (DAGGMN), Lys117, Tyr150, Thr174, and Arg194. Residues Arg282, Lys287, and Val348 each contribute to the UDP-N-acetyl-alpha-D-glucosamine site. Mg(2+)-binding residues include Phe357, Arg358, and Ala360. Residues Glu370 and Glu378 each contribute to the UDP-N-acetyl-alpha-D-glucosamine site. Residue Thr384 coordinates Mg(2+).

Belongs to the glycosyltransferase group 1 family. MshA subfamily. In terms of assembly, homodimer.

It carries out the reaction 1D-myo-inositol 3-phosphate + UDP-N-acetyl-alpha-D-glucosamine = 1D-myo-inositol 2-acetamido-2-deoxy-alpha-D-glucopyranoside 3-phosphate + UDP + H(+). Functionally, catalyzes the transfer of a N-acetyl-glucosamine moiety to 1D-myo-inositol 3-phosphate to produce 1D-myo-inositol 2-acetamido-2-deoxy-glucopyranoside 3-phosphate in the mycothiol biosynthesis pathway. This chain is D-inositol 3-phosphate glycosyltransferase, found in Streptomyces griseus subsp. griseus (strain JCM 4626 / CBS 651.72 / NBRC 13350 / KCC S-0626 / ISP 5235).